The following is a 435-amino-acid chain: Methylenetetrahydrofolate--tRNA-(uracil-5-)-methyltransferase TrmFO (435 aa).

7 to 12 lines the FAD pocket; the sequence is GAGLAG.

The protein belongs to the MnmG family. TrmFO subfamily. The cofactor is FAD.

Its subcellular location is the cytoplasm. The catalysed reaction is uridine(54) in tRNA + (6R)-5,10-methylene-5,6,7,8-tetrahydrofolate + NADH + H(+) = 5-methyluridine(54) in tRNA + (6S)-5,6,7,8-tetrahydrofolate + NAD(+). It catalyses the reaction uridine(54) in tRNA + (6R)-5,10-methylene-5,6,7,8-tetrahydrofolate + NADPH + H(+) = 5-methyluridine(54) in tRNA + (6S)-5,6,7,8-tetrahydrofolate + NADP(+). Functionally, catalyzes the folate-dependent formation of 5-methyl-uridine at position 54 (M-5-U54) in all tRNAs. The sequence is that of Methylenetetrahydrofolate--tRNA-(uracil-5-)-methyltransferase TrmFO from Thermotoga maritima (strain ATCC 43589 / DSM 3109 / JCM 10099 / NBRC 100826 / MSB8).